Here is a 403-residue protein sequence, read N- to C-terminus: RUN domain-containing protein 3B (403 aa).

The disordered stretch occupies residues 1–20 (MASRSLGGLSGSRGGGKKSL). An Omega-N-methylarginine modification is found at arginine 13. The region spanning 53 to 185 (DDSSPEFNNF…IDFSFCLKGE (133 aa)) is the RUN domain. Residues 207 to 232 (SDSISSDEEELRTFGSSDSEGSTPEN) are disordered. Phosphoserine occurs at positions 211 and 212. A compositionally biased stretch (polar residues) spans 220-231 (FGSSDSEGSTPE). Positions 296–321 (AHKLEKEQLEYIIVELQDQLKSYQSL) form a coiled coil.

It belongs to the RUNDC3 family. As to quaternary structure, interacts with RAP2A.

In Rattus norvegicus (Rat), this protein is RUN domain-containing protein 3B (Rundc3b).